The following is a 268-amino-acid chain: Ribosomal RNA small subunit methyltransferase A (268 aa).

The S-adenosyl-L-methionine site is built by asparagine 16, leucine 18, glycine 43, glutamate 64, aspartate 89, and asparagine 110.

It belongs to the class I-like SAM-binding methyltransferase superfamily. rRNA adenine N(6)-methyltransferase family. RsmA subfamily.

It localises to the cytoplasm. The enzyme catalyses adenosine(1518)/adenosine(1519) in 16S rRNA + 4 S-adenosyl-L-methionine = N(6)-dimethyladenosine(1518)/N(6)-dimethyladenosine(1519) in 16S rRNA + 4 S-adenosyl-L-homocysteine + 4 H(+). Its function is as follows. Specifically dimethylates two adjacent adenosines (A1518 and A1519) in the loop of a conserved hairpin near the 3'-end of 16S rRNA in the 30S particle. May play a critical role in biogenesis of 30S subunits. The polypeptide is Ribosomal RNA small subunit methyltransferase A (Pseudomonas savastanoi pv. phaseolicola (strain 1448A / Race 6) (Pseudomonas syringae pv. phaseolicola (strain 1448A / Race 6))).